A 275-amino-acid chain; its full sequence is Large ribosomal subunit protein uL2 (275 aa).

2 disordered regions span residues Gly-36–Gly-55 and Val-224–Lys-263.

This sequence belongs to the universal ribosomal protein uL2 family. Part of the 50S ribosomal subunit. Forms a bridge to the 30S subunit in the 70S ribosome.

One of the primary rRNA binding proteins. Required for association of the 30S and 50S subunits to form the 70S ribosome, for tRNA binding and peptide bond formation. It has been suggested to have peptidyltransferase activity; this is somewhat controversial. Makes several contacts with the 16S rRNA in the 70S ribosome. This is Large ribosomal subunit protein uL2 from Rhodospirillum centenum (strain ATCC 51521 / SW).